A 56-amino-acid chain; its full sequence is Large ribosomal subunit protein bL32B (56 aa).

Positions 1-19 (MAVPKRRMSRSNTRHRRAQ) are enriched in basic residues. Residues 1 to 22 (MAVPKRRMSRSNTRHRRAQWKA) form a disordered region.

It belongs to the bacterial ribosomal protein bL32 family.

The sequence is that of Large ribosomal subunit protein bL32B (rpmF2) from Streptomyces coelicolor (strain ATCC BAA-471 / A3(2) / M145).